The chain runs to 198 residues: NAD(P)H dehydrogenase (quinone) (198 aa).

Residues 4–190 enclose the Flavodoxin-like domain; it reads VLVLYYSAYG…EGAKYQGAHV (187 aa). Residues 10–15 and 78–80 each bind FMN; these read SAYGHI and TRF. Y12 provides a ligand contact to NAD(+). W98 lines the substrate pocket. Residues 113–119 and H134 contribute to the FMN site; that span reads SSATQHG.

It belongs to the WrbA family. FMN serves as cofactor.

The enzyme catalyses a quinone + NADH + H(+) = a quinol + NAD(+). It carries out the reaction a quinone + NADPH + H(+) = a quinol + NADP(+). The chain is NAD(P)H dehydrogenase (quinone) from Rhizobium johnstonii (strain DSM 114642 / LMG 32736 / 3841) (Rhizobium leguminosarum bv. viciae).